Reading from the N-terminus, the 341-residue chain is Farnesyl pyrophosphate synthase 2 (341 aa).

Residues K46, R49, and Q85 each contribute to the isopentenyl diphosphate site. Mg(2+)-binding residues include D92 and D96. Dimethylallyl diphosphate is bound at residue R101. R102 contributes to the isopentenyl diphosphate binding site. Residues K189, T190, Q228, K245, and K254 each contribute to the dimethylallyl diphosphate site.

Belongs to the FPP/GGPP synthase family. Mg(2+) is required as a cofactor. Mainly expressed in trichomes, roots and flowers, and, to a lower extent, in leaves and stems.

The protein resides in the cytoplasm. The protein localises to the nucleus. The catalysed reaction is isopentenyl diphosphate + dimethylallyl diphosphate = (2E)-geranyl diphosphate + diphosphate. It catalyses the reaction isopentenyl diphosphate + (2E)-geranyl diphosphate = (2E,6E)-farnesyl diphosphate + diphosphate. It participates in isoprenoid biosynthesis; farnesyl diphosphate biosynthesis; farnesyl diphosphate from geranyl diphosphate and isopentenyl diphosphate: step 1/1. The protein operates within sesquiterpene biosynthesis. It functions in the pathway isoprenoid biosynthesis; geranyl diphosphate biosynthesis; geranyl diphosphate from dimethylallyl diphosphate and isopentenyl diphosphate: step 1/1. In terms of biological role, catalyzes the sequential condensation of isopentenyl pyrophosphate with the allylic pyrophosphates, dimethylallyl pyrophosphate, and then with the resultant geranylpyrophosphate to the ultimate product farnesyl pyrophosphate. The sequence is that of Farnesyl pyrophosphate synthase 2 from Cannabis sativa (Hemp).